Reading from the N-terminus, the 360-residue chain is Protein Wnt-2 (360 aa).

The first 25 residues, 1–25 (MNAPLGGIWLWLPLLLTWLTPEVNS), serve as a signal peptide directing secretion. 11 disulfide bridges follow: Cys76–Cys87, Cys127–Cys135, Cys137–Cys157, Cys206–Cys220, Cys208–Cys215, Cys278–Cys309, Cys294–Cys304, Cys308–Cys348, Cys324–Cys339, Cys326–Cys336, and Cys331–Cys332. A lipid anchor (O-palmitoleoyl serine; by PORCN) is attached at Ser212. An N-linked (GlcNAc...) asparagine glycan is attached at Asn295.

Belongs to the Wnt family. Post-translationally, palmitoleoylation is required for efficient binding to frizzled receptors. Depalmitoleoylation leads to Wnt signaling pathway inhibition.

The protein localises to the secreted. It is found in the extracellular space. Its subcellular location is the extracellular matrix. Functionally, ligand for members of the frizzled family of seven transmembrane receptors. Functions in the canonical Wnt signaling pathway that results in activation of transcription factors of the TCF/LEF family. Functions as a upstream regulator of FGF10 expression. Plays an important role in embryonic lung development. May contribute to embryonic brain development by regulating the proliferation of dopaminergic precursors and neurons. The chain is Protein Wnt-2 (WNT2) from Gorilla gorilla gorilla (Western lowland gorilla).